The following is a 132-amino-acid chain: L-ectoine synthase (132 aa).

It belongs to the ectoine synthase family.

It catalyses the reaction (2S)-4-acetamido-2-aminobutanoate = L-ectoine + H2O. It participates in amine and polyamine biosynthesis; ectoine biosynthesis; L-ectoine from L-aspartate 4-semialdehyde: step 3/3. Catalyzes the circularization of gamma-N-acetyl-alpha,gamma-diaminobutyric acid (ADABA) to ectoine (1,4,5,6-tetrahydro-2-methyl-4-pyrimidine carboxylic acid), which is an excellent osmoprotectant. In Hahella chejuensis (strain KCTC 2396), this protein is L-ectoine synthase.